The chain runs to 219 residues: uncharacterized protein (219 aa).

The signal sequence occupies residues 1-26 (MNDRGVPNSRTGPSLLALLPAANSYA). 2 disordered regions span residues 36 to 57 (AVGVGGGSYKSPTRGSPGTRGG) and 88 to 219 (SGLG…GLCE). Residues 127–173 (LSPPSALGSSPAGRGRPAPAIAAAKSSPLSASAAPGRCGARPRAPSR) show a composition bias toward low complexity. Basic residues predominate over residues 176-202 (RERRPRGNPRAPLRRGARGRRRSHTRG).

This is an uncharacterized protein from Gallid herpesvirus 2 (strain Chicken/Md5/ATCC VR-987) (GaHV-2).